The chain runs to 655 residues: MINEILDNKMSDIRSSGKNVKLESTTMTSVKDLPSWCFIKSRAMLKGDNKPFVVSVLNSSTETPSKGWKCVLFQTNINDKGQLWQLVDGHLLSQLYGSFVLDIDSDNNNGTDLIINSQIPSNNERQTWKLGSNGEIMNNQTKMFIGVKGSNSAPIDPSNNAQLVCESTTSVDNVCFQWDLEPSFPLNSILTQTTEPFPNYTDEKLKAYIYISNNLIKGIDDIRSQYTNSNYSFNSFSNELVNMKYPDSISKDSFDEIKTQLQSEFEQVDSIINLFNNYQQFHIGLFADNSARLNQIVSIIQFDDKTTSVAGSILSIISNILKLVLTFLPQPAGNFGNVMMGAISVSSAASTPNKVNVDPFKVELSKLWDSLSSNFEAILFNMGTMESMILKDWGKMKAVYQLLSTSLAWTPTMTSQLISTGATAYGISLLQMLLPEKYQIYCWNQNFDAKYGFAPGYPAPIPSDIPEYCTWTDENGDVLFIASTSDLRVHPIKEVMDMVWKDNVVVKKDFYRSRNGWSFPTSLVNRITRWLIPNVTNNTSIPMKYTIGDFKGDSKTTYQLDLPTFSTSYPLDVSHNNNGHNYHFTITITNALDNSKIASLVIIVSAVGGSFSKGQLGDHSVTKGYLIGDPIFNTSVRDSTSTCNIIVNIDYNDTN.

The region spanning 40–181 is the Ricin B-type lectin domain; sequence KSRAMLKGDN…DNVCFQWDLE (142 aa).

The protein belongs to the cup family.

The chain is Putative calcium up-regulated protein J (cupJ) from Dictyostelium discoideum (Social amoeba).